The sequence spans 546 residues: DDB1- and CUL4-associated factor 11 (546 aa).

Over residues 1 to 19 (MGSRNSSSAGSGSGDPSEG) the composition is skewed to low complexity. The segment at 1–40 (MGSRNSSSAGSGSGDPSEGLPRRGAGLRRSEEEEEEDEDV) is disordered. L49 and S75 each carry phosphoserine. WD repeat units follow at residues 170 to 210 (SYSQ…RKFK), 216 to 258 (DVGW…TALD), 263 to 302 (ERRF…RTLQ), 305 to 345 (SHED…EDDP), 353 to 392 (GHQD…SREG), 435 to 480 (GVLH…KKLT), and 481 to 520 (NHKA…YFQD). The interval 523 to 546 (PESEECASAPAPVPQSSTPFSSPQ) is disordered. The span at 536–546 (PQSSTPFSSPQ) shows a compositional bias: polar residues.

In terms of assembly, interacts with DDB1 and CUL4A.

It participates in protein modification; protein ubiquitination. Functionally, may function as a substrate receptor for CUL4-DDB1 E3 ubiquitin-protein ligase complex. This chain is DDB1- and CUL4-associated factor 11 (DCAF11), found in Homo sapiens (Human).